The sequence spans 596 residues: Uptake hydrogenase large subunit (596 aa).

4 residues coordinate Ni(2+): C75, C78, C575, and C578.

Belongs to the [NiFe]/[NiFeSe] hydrogenase large subunit family. In terms of assembly, heterodimer of a large and a small subunit. It depends on Ni(2+) as a cofactor.

It localises to the cell membrane. It carries out the reaction H2 + A = AH2. This enzyme recycles the H(2) produced by nitrogenase to increase the production of ATP and to protect nitrogenase against inhibition or damage by O(2) under carbon- or phosphate-limited conditions. This chain is Uptake hydrogenase large subunit (hupB), found in Rhizobium leguminosarum bv. viciae.